The chain runs to 384 residues: Epoxyqueuosine reductase (384 aa).

Aspartate 144 serves as the catalytic Proton donor. Residues leucine 186 to threonine 218 form the 4Fe-4S ferredoxin-type domain. Positions 198, 201, 204, 208, 224, 251, 254, and 258 each coordinate [4Fe-4S] cluster.

Belongs to the QueG family. As to quaternary structure, monomer. Cob(II)alamin serves as cofactor. It depends on [4Fe-4S] cluster as a cofactor.

The protein resides in the cytoplasm. The enzyme catalyses epoxyqueuosine(34) in tRNA + AH2 = queuosine(34) in tRNA + A + H2O. Its pathway is tRNA modification; tRNA-queuosine biosynthesis. Catalyzes the conversion of epoxyqueuosine (oQ) to queuosine (Q), which is a hypermodified base found in the wobble positions of tRNA(Asp), tRNA(Asn), tRNA(His) and tRNA(Tyr). This chain is Epoxyqueuosine reductase, found in Salmonella typhimurium (strain LT2 / SGSC1412 / ATCC 700720).